A 206-amino-acid polypeptide reads, in one-letter code: Small ribosomal subunit protein uS4 (206 aa).

The 63-residue stretch at 96–158 (SRLDNVVYRM…AKGQLRIKGA (63 aa)) folds into the S4 RNA-binding domain.

This sequence belongs to the universal ribosomal protein uS4 family. As to quaternary structure, part of the 30S ribosomal subunit. Contacts protein S5. The interaction surface between S4 and S5 is involved in control of translational fidelity.

Functionally, one of the primary rRNA binding proteins, it binds directly to 16S rRNA where it nucleates assembly of the body of the 30S subunit. In terms of biological role, with S5 and S12 plays an important role in translational accuracy. This chain is Small ribosomal subunit protein uS4, found in Coxiella burnetii (strain CbuG_Q212) (Coxiella burnetii (strain Q212)).